The primary structure comprises 1669 residues: Collagen alpha-1(IV) chain (1669 aa).

The first 27 residues, 1-27 (MGPRLSVWLLLLFAALLLHEERSRAAA), serve as a signal peptide directing secretion. Positions 28–172 (KGDCGGSGCG…LGHVPGTLLK (145 aa)) are cleaved as a propeptide — N-terminal propeptide (7S domain). A disordered region spans residues 47–1443 (QKGERGLPGL…MGPPGTPSVD (1397 aa)). Positions 92 to 104 (TRGPPGAAGYPGN) are enriched in low complexity. Asn-126 carries N-linked (GlcNAc...) asparagine glycosylation. The segment at 173 to 1440 (GERGFPGIPG…PGSMGPPGTP (1268 aa)) is triple-helical region. A compositionally biased stretch (pro residues) spans 196 to 214 (VGPPGFTGPPGPPGPPGPP). 3 positions are modified to 3-hydroxyproline: Pro-204, Pro-207, and Pro-210. Positions 234–247 (QGVSGPPGVPGQAQ) are enriched in low complexity. A compositionally biased stretch (basic and acidic residues) spans 289 to 298 (PGKDGEKGER). Pro residues predominate over residues 367–376 (PGQPGPPGFP). The span at 377–387 (TPGQAGAPGFP) shows a compositional bias: low complexity. Pro residues-rich tracts occupy residues 413 to 424 (PGPPGPPGPPGQ) and 436 to 448 (PGPP…PGTP). Low complexity predominate over residues 485–494 (PGEIGFPGQP). Basic and acidic residues-rich tracts occupy residues 497–508 (KGDRGLPGRDGL) and 535–545 (FDMRLKGDKGD). A compositionally biased stretch (gly residues) spans 586–595 (GPPGGVGFPG). 2 positions are modified to 3-hydroxyproline: Pro-587 and Pro-602. Pro-603 carries the 4-hydroxyproline modification. At Pro-605 the chain carries 3-hydroxyproline. Pro-606 carries the 4-hydroxyproline modification. Low complexity predominate over residues 611 to 620 (IGPVGEKGQA). The segment covering 621 to 630 (GFPGGPGSPG) has biased composition (gly residues). 4-hydroxyproline occurs at positions 623, 626, 629, and 632. Pro-647 is subject to 3-hydroxyproline. The span at 715 to 731 (RPGFNGLPGNPGPQGQK) shows a compositional bias: low complexity. Positions 758 to 767 (GSIGGPGVPG) are enriched in gly residues. Residues 784 to 802 (PGPPGVQGPAGPPGVPGIG) are compositionally biased toward pro residues. Residues 803–817 (PPGAMGPPGGQGPPG) are compositionally biased toward gly residues. Composition is skewed to low complexity over residues 847-875 (SQGL…PGFP) and 994-1003 (DPGLSGTPGS). The span at 1011 to 1020 (GSVGGMGLPG) shows a compositional bias: gly residues. Residue Pro-1214 is modified to 3-hydroxyproline. Positions 1220–1230 (QPGLPGTPGHP) are enriched in low complexity. Positions 1247–1258 (PGHPGPMGPPGF) are enriched in pro residues. A compositionally biased stretch (gly residues) spans 1290-1299 (GMPGIGGSPG). Low complexity-rich tracts occupy residues 1333–1343 (DQGVPGPKGLQ), 1368–1391 (PGLK…SVGL), and 1398–1412 (PGFD…ETGP). A compositionally biased stretch (pro residues) spans 1413–1428 (FGPPGPRGFPGPPGPD). Pro-1424 carries the 3-hydroxyproline modification. In terms of domain architecture, Collagen IV NC1 spans 1445-1669 (GFLVTRHSQT…SRCQVCMRRT (225 aa)). Disulfide bonds link Cys-1460-Cys-1551, Cys-1493-Cys-1548, Cys-1505-Cys-1511, Cys-1570-Cys-1665, Cys-1604-Cys-1662, and Cys-1616-Cys-1622. An S-Lysyl-methionine sulfilimine (Met-Lys) (interchain with K-1651) cross-link involves residue Met-1533. Residue Lys-1651 forms an S-Lysyl-methionine sulfilimine (Lys-Met) (interchain with M-1533) linkage.

Belongs to the type IV collagen family. As to quaternary structure, there are six type IV collagen isoforms, alpha 1(IV)-alpha 6(IV), each of which can form a triple helix structure with 2 other chains to generate type IV collagen network. Interacts with EFEMP2. Post-translationally, lysines at the third position of the tripeptide repeating unit (G-X-Y) are hydroxylated. The modified lysines can be O-glycosylated. In terms of processing, contains 4-hydroxyproline. Prolines at the third position of the tripeptide repeating unit (G-X-Y) are hydroxylated in some or all of the chains. Contains 3-hydroxyproline. This modification occurs on the first proline residue in the sequence motif Gly-Pro-Hyp, where Hyp is 4-hydroxyproline. Post-translationally, type IV collagens contain numerous cysteine residues which are involved in inter- and intramolecular disulfide bonding. 12 of these, located in the NC1 domain, are conserved in all known type IV collagens. In terms of processing, the trimeric structure of the NC1 domains is stabilized by covalent bonds (sulfilimine cross-links) between Lys and Met residues. These cross-links are important for the mechanical stability of the basement membrane. Sulfilimine cross-link is catalyzed by PXDN. Proteolytic processing produces the C-terminal NC1 peptide, arresten. In terms of tissue distribution, detected in the basement membrane of the cornea (at protein level).

The protein resides in the secreted. Its subcellular location is the extracellular space. The protein localises to the extracellular matrix. It is found in the basement membrane. In terms of biological role, type IV collagen is the major structural component of glomerular basement membranes (GBM), forming a 'chicken-wire' meshwork together with laminins, proteoglycans and entactin/nidogen. Functionally, arresten, comprising the C-terminal NC1 domain, inhibits angiogenesis and tumor formation. The C-terminal half is found to possess the anti-angiogenic activity. Specifically inhibits endothelial cell proliferation, migration and tube formation. This chain is Collagen alpha-1(IV) chain, found in Mus musculus (Mouse).